The primary structure comprises 221 residues: Ribosomal RNA small subunit methyltransferase G (221 aa).

S-adenosyl-L-methionine-binding positions include Gly85, Leu90, 138–139 (AE), and Arg151.

This sequence belongs to the methyltransferase superfamily. RNA methyltransferase RsmG family.

The protein resides in the cytoplasm. It carries out the reaction guanosine(527) in 16S rRNA + S-adenosyl-L-methionine = N(7)-methylguanosine(527) in 16S rRNA + S-adenosyl-L-homocysteine. In terms of biological role, specifically methylates the N7 position of guanine in position 527 of 16S rRNA. This chain is Ribosomal RNA small subunit methyltransferase G, found in Caulobacter sp. (strain K31).